The chain runs to 304 residues: MRLPIFLDTDPGIDDAVAIAAAIFAPELDLQLMTTVAGNVSVEKTTRNALQLLHFWNAEIPLAQGAAVPLVRAPRDAASVHGESGMAGYDFVEHNRKPLGIPAFLAIRDALMRAPEPVTLVAIGPLTNIALLLLQCPECKPYIRRLVIMGGSAGRGNCTPNAEFNIAADPEAAACVFRSGIEIVMCGLDVTNQAILTPDYLATLPELNRTGKMLHALFSHYRSGSMQSGLRMHDLCAIAWLVRPDLFTLKPCFVAVETQGEFTSGTTVVDIDGCLGKPANVQVALDLNVKGFQQWVAEVLALVP.

Residue His233 is part of the active site.

Belongs to the IUNH family. RihC subfamily.

Its function is as follows. Hydrolyzes both purine and pyrimidine ribonucleosides with a broad-substrate specificity. The protein is Non-specific ribonucleoside hydrolase RihC of Shigella flexneri serotype 5b (strain 8401).